Here is a 495-residue protein sequence, read N- to C-terminus: UDP-N-acetylmuramoyl-L-alanyl-D-glutamate--2,6-diaminopimelate ligase (495 aa).

Ser29 is a UDP-N-acetyl-alpha-D-muramoyl-L-alanyl-D-glutamate binding site. Gly111 to Ser117 is an ATP binding site. UDP-N-acetyl-alpha-D-muramoyl-L-alanyl-D-glutamate-binding positions include Thr153 to Thr154, Ser180, Gln186, and Arg188. N6-carboxylysine is present on Lys220. Residues Arg384, Asp408–Arg411, Gly459, and Glu463 each bind meso-2,6-diaminopimelate. The short motif at Asp408–Arg411 is the Meso-diaminopimelate recognition motif element.

It belongs to the MurCDEF family. MurE subfamily. It depends on Mg(2+) as a cofactor. Carboxylation is probably crucial for Mg(2+) binding and, consequently, for the gamma-phosphate positioning of ATP.

It localises to the cytoplasm. It carries out the reaction UDP-N-acetyl-alpha-D-muramoyl-L-alanyl-D-glutamate + meso-2,6-diaminopimelate + ATP = UDP-N-acetyl-alpha-D-muramoyl-L-alanyl-gamma-D-glutamyl-meso-2,6-diaminopimelate + ADP + phosphate + H(+). It participates in cell wall biogenesis; peptidoglycan biosynthesis. In terms of biological role, catalyzes the addition of meso-diaminopimelic acid to the nucleotide precursor UDP-N-acetylmuramoyl-L-alanyl-D-glutamate (UMAG) in the biosynthesis of bacterial cell-wall peptidoglycan. This Xanthomonas campestris pv. campestris (strain 8004) protein is UDP-N-acetylmuramoyl-L-alanyl-D-glutamate--2,6-diaminopimelate ligase.